The sequence spans 465 residues: Probable zinc metalloprotease PTT_17836 (465 aa).

The N-terminal stretch at 1–20 is a signal peptide; it reads MRSASTLAVCAATLLQIACS. N140 is a glycosylation site (N-linked (GlcNAc...) asparagine). H163, D183, and E216 together coordinate Zn(2+). N231 is a glycosylation site (N-linked (GlcNAc...) asparagine). D243 is a Zn(2+) binding site. 6 N-linked (GlcNAc...) asparagine glycosylation sites follow: N272, N330, N378, N384, N421, and N426. Residues 371 to 464 enclose the Fibronectin type-III domain; that stretch reads APTNVGVNTT…LPFPFGCARN (94 aa).

Belongs to the peptidase M28 family. M28B subfamily. Zn(2+) serves as cofactor.

It is found in the secreted. The chain is Probable zinc metalloprotease PTT_17836 from Pyrenophora teres f. teres (strain 0-1) (Barley net blotch fungus).